The primary structure comprises 2554 residues: Highly reducing polyketide synthase PKS6 (2554 aa).

The segment at 1–48 (MGSLSAVPATNGNHAALNGSASTNGQHVNGSTHVNGNHSLNGSAQVNG) is disordered. Positions 8–48 (PATNGNHAALNGSASTNGQHVNGSTHVNGNHSLNGSAQVNG) are enriched in polar residues. The 426-residue stretch at 56–481 (LEPIAVVGMS…GTNAHVVVDA (426 aa)) folds into the Ketosynthase family 3 (KS3) domain. Catalysis depends on for beta-ketoacyl synthase activity residues Cys-230, His-367, and His-407. A malonyl-CoA:ACP transacylase (MAT) domain region spans residues 595-913 (VFSGQGAQYP…HYTGSLKRGE (319 aa)). The interval 981–1119 (HELLGTLVHD…GLVQVILKSE (139 aa)) is N-terminal hotdog fold. Positions 981–1281 (HELLGTLVHD…QAWGVVATKL (301 aa)) are dehydratase (DH) domain. Positions 981–1287 (HELLGTLVHD…ATKLPDVSIG (307 aa)) constitute a PKS/mFAS DH domain. His-1013 (proton acceptor; for dehydratase activity) is an active-site residue. Residues 1137-1287 (AQHIPANQFY…ATKLPDVSIG (151 aa)) are C-terminal hotdog fold. Asp-1200 functions as the Proton donor; for dehydratase activity in the catalytic mechanism. The methyltransferase (CMet) domain stretch occupies residues 1451–1556 (VEVGAGTGSA…KTMLRPGGKL (106 aa)). The interval 1840-2153 (GVLDTIRWVD…AGKHTGKVIL (314 aa)) is enoyl reductase (ER) domain. Positions 2177-2353 (ATYLVVGGLG…TAYAVNIGAI (177 aa)) are ketoreductase (KR) domain. In terms of domain architecture, Carrier spans 2457-2534 (EAQDIICDAI…ELAEIVTKGS (78 aa)). Ser-2494 is modified (O-(pantetheine 4'-phosphoryl)serine).

It participates in secondary metabolite biosynthesis. Its function is as follows. Highly reducing polyketide synthase; part of the gene cluster that mediates the biosynthesis of the lipopeptide fusaristatin A. Fusaristatin A consists of a polyketide chain linked to three amino acid residues glutamine (Gln), dehydroalanine (dehydro-Ala), and beta-aminoisobutyric acid. The biosynthesis starts with formation of a linear polyketide chain by the highly reducing polyketide synthase PKS6. The gene cluster does not contain an acyl-CoA ligase or an acyl-transferase, and it is therefore predicted that the polyketide is transferred directly to the nonribosomal peptide synthetase NRPS7. Modules 1-3 from NRPS7 incorporate dehydro-Ala, Gln, and beta-aminoisobutyric acid in the compound, which is released by cyclization. The beta-aminoisobutyric acid units are most likely not freely available to the NRPS, but can be synthesized from thymine, which requires a dehydrogenase, a monooxygenase, and an aminotransferase. The fusaristatin A cluster contains a cytochrome P450 monooxygenase (FGSG_08207) and an aminotransferase (FGSG_17085), which theoretically can perform two of the enzymatic steps. The enzymes may however also be involved in biosynthesis of dehydroalanine or modification of the polyketide. The dehydro-Ala residue can be a result of cyclization, where serine is dehydrated. The last gene of the cluster encodes a protein with an A/B barrel domain found in variable enzymes, which hampers functional prediction. This chain is Highly reducing polyketide synthase PKS6, found in Gibberella zeae (strain ATCC MYA-4620 / CBS 123657 / FGSC 9075 / NRRL 31084 / PH-1) (Wheat head blight fungus).